The sequence spans 143 residues: MSHDSDDKTYPYQKDDAELRRRLTPMQYEVTQHAATERAFTGEYTDTEDAGIYKCVVCSTPLFESGAKFHSGCGWPSYFKPLNGEVIDEKIDHMHGMVRVEVRCNHCGAHLGHVFEDGPRDKTGLRYCINSAALNFESRPEKE.

Residues 16 to 139 form the MsrB domain; sequence DAELRRRLTP…NSAALNFESR (124 aa). Zn(2+)-binding residues include cysteine 55, cysteine 58, cysteine 104, and cysteine 107. Cysteine 128 (nucleophile) is an active-site residue.

It belongs to the MsrB Met sulfoxide reductase family. It depends on Zn(2+) as a cofactor.

It carries out the reaction L-methionyl-[protein] + [thioredoxin]-disulfide + H2O = L-methionyl-(R)-S-oxide-[protein] + [thioredoxin]-dithiol. The polypeptide is Peptide methionine sulfoxide reductase MsrB (Burkholderia ambifaria (strain MC40-6)).